Here is a 91-residue protein sequence, read N- to C-terminus: Small ribosomal subunit protein uS19 (91 aa).

The protein belongs to the universal ribosomal protein uS19 family.

Protein S19 forms a complex with S13 that binds strongly to the 16S ribosomal RNA. This is Small ribosomal subunit protein uS19 from Shouchella clausii (strain KSM-K16) (Alkalihalobacillus clausii).